A 317-amino-acid chain; its full sequence is Cytochrome f (317 aa).

The first 34 residues, M1 to A34, serve as a signal peptide directing secretion. Heme is bound by residues Y35, C55, C58, and H59. The helical transmembrane segment at V284 to K304 threads the bilayer.

Belongs to the cytochrome f family. In terms of assembly, the 4 large subunits of the cytochrome b6-f complex are cytochrome b6, subunit IV (17 kDa polypeptide, PetD), cytochrome f and the Rieske protein, while the 4 small subunits are PetG, PetL, PetM and PetN. The complex functions as a dimer. The cofactor is heme.

The protein resides in the cellular thylakoid membrane. In terms of biological role, component of the cytochrome b6-f complex, which mediates electron transfer between photosystem II (PSII) and photosystem I (PSI), cyclic electron flow around PSI, and state transitions. In Prochlorococcus marinus (strain MIT 9215), this protein is Cytochrome f.